A 248-amino-acid chain; its full sequence is tRNA pseudouridine synthase A (248 aa).

Asp-55 serves as the catalytic Nucleophile. Tyr-114 lines the substrate pocket.

It belongs to the tRNA pseudouridine synthase TruA family. As to quaternary structure, homodimer.

It carries out the reaction uridine(38/39/40) in tRNA = pseudouridine(38/39/40) in tRNA. Functionally, formation of pseudouridine at positions 38, 39 and 40 in the anticodon stem and loop of transfer RNAs. The sequence is that of tRNA pseudouridine synthase A from Rhodopseudomonas palustris (strain ATCC BAA-98 / CGA009).